We begin with the raw amino-acid sequence, 185 residues long: Uroplakin-2 (185 aa).

An N-terminal signal peptide occupies residues 1–26 (MASPWPVWTLSWILILLAVLVPGAAA). Residues 27–85 (DFNISSLSGLLSPVMTESLLVALPPCHLTGGNATLTVRRANDSKVVRSSFVVPPCRGRR) constitute a propeptide that is removed on maturation. N-linked (GlcNAc...) asparagine glycans are attached at residues N29, N58, and N67. Over 86–156 (ELVSVVDSGS…IGLAMARTGG (71 aa)) the chain is Lumenal. A helical transmembrane segment spans residues 157–177 (MVVITVLLSVAMFLLVLGLII). The Cytoplasmic portion of the chain corresponds to 178–185 (ALALGARK).

Belongs to the uroplakin-2 family. In terms of assembly, interacts with uroplakin-1a (UPK1A). Bladder epithelium.

It is found in the cell membrane. In terms of biological role, component of the asymmetric unit membrane (AUM); a highly specialized biomembrane elaborated by terminally differentiated urothelial cells. May play an important role in regulating the assembly of the AUM. This Bos taurus (Bovine) protein is Uroplakin-2 (UPK2).